The sequence spans 230 residues: Cytochrome c oxidase subunit 2 (230 aa).

Residues 1 to 29 (NNFFQGYNLLFQHSLFASYMDWFHAFNCS) lie on the Mitochondrial intermembrane side of the membrane. Residues 30–50 (LLLGVLVFVTLLFGYLIFSTF) traverse the membrane as a helical segment. The Mitochondrial matrix portion of the chain corresponds to 51 to 63 (YFKSKKIEYQFGE). The chain crosses the membrane as a helical span at residues 64–84 (LLCSIFPTIILLMQMVPSLSL). The Mitochondrial intermembrane segment spans residues 85 to 230 (LYYYGLMNLD…FKSWCFGTME (146 aa)). 6 residues coordinate Cu cation: H163, C198, E200, C202, H206, and M209. Position 200 (E200) interacts with Mg(2+).

It belongs to the cytochrome c oxidase subunit 2 family. As to quaternary structure, component of the cytochrome c oxidase (complex IV, CIV), a multisubunit enzyme composed of a catalytic core of 3 subunits and several supernumerary subunits. The complex exists as a monomer or a dimer and forms supercomplexes (SCs) in the inner mitochondrial membrane with ubiquinol-cytochrome c oxidoreductase (cytochrome b-c1 complex, complex III, CIII). Requires Cu cation as cofactor.

The protein localises to the mitochondrion inner membrane. The enzyme catalyses 4 Fe(II)-[cytochrome c] + O2 + 8 H(+)(in) = 4 Fe(III)-[cytochrome c] + 2 H2O + 4 H(+)(out). In terms of biological role, component of the cytochrome c oxidase, the last enzyme in the mitochondrial electron transport chain which drives oxidative phosphorylation. The respiratory chain contains 3 multisubunit complexes succinate dehydrogenase (complex II, CII), ubiquinol-cytochrome c oxidoreductase (cytochrome b-c1 complex, complex III, CIII) and cytochrome c oxidase (complex IV, CIV), that cooperate to transfer electrons derived from NADH and succinate to molecular oxygen, creating an electrochemical gradient over the inner membrane that drives transmembrane transport and the ATP synthase. Cytochrome c oxidase is the component of the respiratory chain that catalyzes the reduction of oxygen to water. Electrons originating from reduced cytochrome c in the intermembrane space (IMS) are transferred via the dinuclear copper A center (CU(A)) of subunit 2 and heme A of subunit 1 to the active site in subunit 1, a binuclear center (BNC) formed by heme A3 and copper B (CU(B)). The BNC reduces molecular oxygen to 2 water molecules using 4 electrons from cytochrome c in the IMS and 4 protons from the mitochondrial matrix. The protein is Cytochrome c oxidase subunit 2 (cox-2) of Caenorhabditis remanei (Caenorhabditis vulgaris).